A 357-amino-acid chain; its full sequence is Uroporphyrinogen decarboxylase (357 aa).

Substrate-binding positions include 27-31 (RQAGR), D77, Y154, T209, and H327.

The protein belongs to the uroporphyrinogen decarboxylase family. As to quaternary structure, homodimer.

It is found in the cytoplasm. It catalyses the reaction uroporphyrinogen III + 4 H(+) = coproporphyrinogen III + 4 CO2. It functions in the pathway porphyrin-containing compound metabolism; protoporphyrin-IX biosynthesis; coproporphyrinogen-III from 5-aminolevulinate: step 4/4. Its function is as follows. Catalyzes the decarboxylation of four acetate groups of uroporphyrinogen-III to yield coproporphyrinogen-III. In Proteus mirabilis (strain HI4320), this protein is Uroporphyrinogen decarboxylase.